The primary structure comprises 614 residues: Subtilin transport ATP-binding protein SpaT (614 aa).

Transmembrane regions (helical) follow at residues 34 to 54 (FLKL…SLYI), 69 to 89 (VSIV…SELI), 147 to 167 (IIQA…SIAF), 175 to 195 (VSLL…KIGQ), and 267 to 287 (IAVQ…AFAG). One can recognise an ABC transmembrane type-1 domain in the interval 34-320 (FLKLIRFSII…IMTSIYSIYN (287 aa)). One can recognise an ABC transporter domain in the interval 353 to 593 (VVFQNVSFIY…CPLYKKMDES (241 aa)). 387–394 (GPNGSGKK) serves as a coordination point for ATP.

This sequence belongs to the ABC transporter superfamily.

The protein localises to the cell membrane. Functionally, probably implicated in the export process of the lantibiotic subtilin. The chain is Subtilin transport ATP-binding protein SpaT (spaT) from Bacillus subtilis.